Consider the following 534-residue polypeptide: CTP synthase (534 aa).

The tract at residues methionine 1–leucine 265 is amidoligase domain. Serine 12 is a CTP binding site. Serine 12 is a binding site for UTP. Glycine 13–isoleucine 18 provides a ligand contact to ATP. Residue tyrosine 53 participates in L-glutamine binding. ATP is bound at residue aspartate 70. The Mg(2+) site is built by aspartate 70 and glutamate 140. Residues aspartate 147–glutamate 149, lysine 186–glutamine 191, and lysine 222 contribute to the CTP site. Residues lysine 186–glutamine 191 and lysine 222 each bind UTP. The Glutamine amidotransferase type-1 domain maps to asparagine 289–glutamate 530. Glycine 352 is an L-glutamine binding site. Cysteine 379 (nucleophile; for glutamine hydrolysis) is an active-site residue. L-glutamine is bound by residues leucine 380–glutamine 383, glutamate 403, and arginine 460. Residues histidine 503 and glutamate 505 contribute to the active site.

It belongs to the CTP synthase family. Homotetramer.

It carries out the reaction UTP + L-glutamine + ATP + H2O = CTP + L-glutamate + ADP + phosphate + 2 H(+). The catalysed reaction is L-glutamine + H2O = L-glutamate + NH4(+). It catalyses the reaction UTP + NH4(+) + ATP = CTP + ADP + phosphate + 2 H(+). It functions in the pathway pyrimidine metabolism; CTP biosynthesis via de novo pathway; CTP from UDP: step 2/2. With respect to regulation, allosterically activated by GTP, when glutamine is the substrate; GTP has no effect on the reaction when ammonia is the substrate. The allosteric effector GTP functions by stabilizing the protein conformation that binds the tetrahedral intermediate(s) formed during glutamine hydrolysis. Inhibited by the product CTP, via allosteric rather than competitive inhibition. In terms of biological role, catalyzes the ATP-dependent amination of UTP to CTP with either L-glutamine or ammonia as the source of nitrogen. Regulates intracellular CTP levels through interactions with the four ribonucleotide triphosphates. The chain is CTP synthase from Methanococcoides burtonii (strain DSM 6242 / NBRC 107633 / OCM 468 / ACE-M).